The chain runs to 922 residues: MFLHSVNLWNLAFYVFMVFLATLGLWDVFFGFEENKCSMSYMFEYPEYQKIELPKKLTKRYPAYELYLYGEGSYAEEHKILPLTGIPVLFLPGNAGSYKQVRSIGSIALRKAEDIDFKYHFDFFSVNFNEELVALYGGSLQKQTKFVHECIKAILKLYKGQEFPPTSVAIIGHSMGGLVARALLTLKNFKQDLINLLVTQATPHVAPVMPLDRFITEFYMTVNNYWILNARHINLTTLSVAGGFRDYQVRSGLTFLPTLSHHTSALSVVTSAVPKTWVSTDHLSIVWCKQLQLTTIRAFFDLIDADTKQITQKSKKKLSVLNHHFIRHPAKQFEENPSIISDLTGTSMWVPVKVSRWSYVAYNESDKIYFAFPLANHRKVYTHAYCQSTMLDTNSWIFGCINSTSMCRQGVDLSWKAELLPTIKSLTLRLQDYPSLSHIVVYVPSVHGSKFVVDCEFFKKEARSIQLPVTHLFSFGLSSRKAIINTSGRYYNIELLNLGQIYQAFKVNVVSKCTGGKEEITSIYKLHIPWSYEDSLTIAQVPSSVDISLKLHVAQPENDSHVALLKMYTSSDCQYEVTIKTSFPQILGQVVRFHGGALPAYVVSSILLAYGGQLYSLLSTGFCLEYGTMLDKEAKPYKVDPFVIMIKFLLGYKWFKELWDAVLLPELDAIVLTSQSMCFPLVSLILFLFGTCTAYWSGLLSSASVQLLSSLWLALKRPAELPKDVKVMSPDLPVLTVVFLIISWTTCGALAILLSYLYYVFKVVHLQASLTTFKNNQPVNPKHSRRSEKKSNHHKDSAIQNPRLSANDAEDSLRMHSTVINLLTWVVLLSMPSLIYWSKNLRYYFKLNPDPCKPLAFLLIPAIAVLGNTHTVSIKSSKLLKTASQFPLPLAVGVIAFGSSHLYRVPCFVIIPLVFHSLCNFM.

The Cytoplasmic portion of the chain corresponds to 1–11 (MFLHSVNLWNL). Residues 12 to 32 (AFYVFMVFLATLGLWDVFFGF) traverse the membrane as a helical segment. Residues 33–597 (EENKCSMSYM…GQVVRFHGGA (565 aa)) lie on the Lumenal side of the membrane. Residue serine 174 is part of the active site. 3 N-linked (GlcNAc...) asparagine glycosylation sites follow: asparagine 363, asparagine 402, and asparagine 558. Residues 598-618 (LPAYVVSSILLAYGGQLYSLL) form a helical membrane-spanning segment. Over 619 to 641 (STGFCLEYGTMLDKEAKPYKVDP) the chain is Cytoplasmic. The helical transmembrane segment at 642 to 662 (FVIMIKFLLGYKWFKELWDAV) threads the bilayer. Topologically, residues 663 to 668 (LLPELD) are lumenal. Residues 669–689 (AIVLTSQSMCFPLVSLILFLF) form a helical membrane-spanning segment. Over 690–694 (GTCTA) the chain is Cytoplasmic. A helical membrane pass occupies residues 695–715 (YWSGLLSSASVQLLSSLWLAL). Over 716–733 (KRPAELPKDVKVMSPDLP) the chain is Lumenal. Residues 734–754 (VLTVVFLIISWTTCGALAILL) form a helical membrane-spanning segment. At 755–816 (SYLYYVFKVV…NDAEDSLRMH (62 aa)) the chain is on the cytoplasmic side. A disordered region spans residues 776-801 (NQPVNPKHSRRSEKKSNHHKDSAIQN). Residues 782–793 (KHSRRSEKKSNH) are compositionally biased toward basic residues. Residues 817–837 (STVINLLTWVVLLSMPSLIYW) traverse the membrane as a helical segment. Topologically, residues 838 to 853 (SKNLRYYFKLNPDPCK) are lumenal. A helical transmembrane segment spans residues 854–874 (PLAFLLIPAIAVLGNTHTVSI). Residues 875–894 (KSSKLLKTASQFPLPLAVGV) are Cytoplasmic-facing. Residues 895–915 (IAFGSSHLYRVPCFVIIPLVF) form a helical membrane-spanning segment. Over 916-922 (HSLCNFM) the chain is Lumenal.

It belongs to the GPI inositol-deacylase family.

The protein localises to the endoplasmic reticulum membrane. Functionally, GPI inositol-deacylase that catalyzes the remove of the acyl chain linked to the 2-OH position of inositol ring from the GPI-anchored protein (GPI-AP) in the endoplasmic reticulum. Initiates the post-attachment remodeling phase of GPI-AP biogenesis and participates in endoplasmic reticulum (ER)-to-Golgi transport of GPI-anchored protein. The protein is GPI inositol-deacylase of Rattus norvegicus (Rat).